A 297-amino-acid polypeptide reads, in one-letter code: Glycine--tRNA ligase alpha subunit (297 aa).

Belongs to the class-II aminoacyl-tRNA synthetase family. Tetramer of two alpha and two beta subunits.

The protein resides in the cytoplasm. The enzyme catalyses tRNA(Gly) + glycine + ATP = glycyl-tRNA(Gly) + AMP + diphosphate. The protein is Glycine--tRNA ligase alpha subunit (glyQ) of Halalkalibacterium halodurans (strain ATCC BAA-125 / DSM 18197 / FERM 7344 / JCM 9153 / C-125) (Bacillus halodurans).